The sequence spans 380 residues: S-adenosylmethionine synthase (380 aa).

An ATP-binding site is contributed by H15. D17 is a Mg(2+) binding site. E43 is a K(+) binding site. E56 and Q99 together coordinate L-methionine. A flexible loop region spans residues 99-109 (QSPDIAMGIDN). Residues 164-166 (DAK), 230-231 (RF), D239, 245-246 (RK), and K266 each bind ATP. D239 serves as a coordination point for L-methionine. K270 provides a ligand contact to L-methionine.

This sequence belongs to the AdoMet synthase family. In terms of assembly, homotetramer; dimer of dimers. It depends on Mg(2+) as a cofactor. The cofactor is K(+).

It localises to the cytoplasm. It catalyses the reaction L-methionine + ATP + H2O = S-adenosyl-L-methionine + phosphate + diphosphate. It participates in amino-acid biosynthesis; S-adenosyl-L-methionine biosynthesis; S-adenosyl-L-methionine from L-methionine: step 1/1. Its function is as follows. Catalyzes the formation of S-adenosylmethionine (AdoMet) from methionine and ATP. The overall synthetic reaction is composed of two sequential steps, AdoMet formation and the subsequent tripolyphosphate hydrolysis which occurs prior to release of AdoMet from the enzyme. The sequence is that of S-adenosylmethionine synthase from Rickettsia prowazekii (strain Madrid E).